The following is a 104-amino-acid chain: Fusaric acid biosynthesis protein 2 (104 aa).

This sequence belongs to the YciI family.

The protein operates within mycotoxin biosynthesis. Functionally, part of the gene cluster that mediates the biosynthesis of fusaric acid, a mycotoxin with low to moderate toxicity to animals and humans, but with high phytotoxic properties. L-aspartate is suggested as fusaric acid amino acid precursor that is activated and further processed to O-acetyl-L-homoserine by cluster enzymes aspartate kinase FUB3 and homoserine O-acetyltransferase FUB5, as well as enzymes of the primary metabolism. The polyketide synthase (PKS) FUB1 generates the triketide trans-2-hexenal which is presumptively released by the hydrolase FUB4 and linked to the NRPS-bound amino acid precursor by NAD(P)-dependent dehydrogenase FUB6. FUB1, FUB4, and the non-canonical NRPS Fub8 may form an enzyme complex. Further processing of the NRPS-bound intermediate might be carried out by FUB6 and the sulfhydrylase FUB7, enabling a spontaneous electrocyclization to close the carbon backbone of fusaric acid. Dihydrofusaric acid is likely to be released via reduction by the thioester reductase (TR) domain of FUB8 whereupon the final oxidation to fusaric acid may (also) be performed by the FMN-dependent dehydrogenase FUB9. This chain is Fusaric acid biosynthesis protein 2, found in Gibberella moniliformis (strain M3125 / FGSC 7600) (Maize ear and stalk rot fungus).